A 502-amino-acid chain; its full sequence is Histidine--tRNA ligase (502 aa).

This sequence belongs to the class-II aminoacyl-tRNA synthetase family. Homodimer.

It is found in the cytoplasm. The enzyme catalyses tRNA(His) + L-histidine + ATP = L-histidyl-tRNA(His) + AMP + diphosphate + H(+). This chain is Histidine--tRNA ligase, found in Brucella suis (strain ATCC 23445 / NCTC 10510).